Here is a 413-residue protein sequence, read N- to C-terminus: NADH:flavin oxidoreductase FG08077 (413 aa).

FMN is bound at residue 53–56 (APLC). Y58 serves as a coordination point for substrate. Residues A88 and Q130 each contribute to the FMN site. 211 to 214 (HAAH) lines the substrate pocket. FMN-binding positions include R264 and 370–371 (GR).

This sequence belongs to the NADH:flavin oxidoreductase/NADH oxidase family. NamA subfamily. FMN is required as a cofactor.

It participates in mycotoxin biosynthesis. Functionally, NADH:flavin oxidoreductase; part of the gene cluster that mediates the biosynthesis of butenolide, a mycotoxin that shows antibiotic activity but does not seem to play a major role in the spread of head blight in wheat. Butenolide is derived from glutamic acid via a 4-acetamido-2-butenoic acid intermediate. The predicted function of the NADH:flavin oxidoreductase FG08077, the cytochrome P450 monooxygenase FG08079, the decarboxylase FG08083, and the putative acetyltransferase FG08082 are consistent with this pathway, however, the respective activities of the butelonide biosynthesis cluster enzymes have still to be experimentally determined. This Gibberella zeae (strain ATCC MYA-4620 / CBS 123657 / FGSC 9075 / NRRL 31084 / PH-1) (Wheat head blight fungus) protein is NADH:flavin oxidoreductase FG08077.